The chain runs to 930 residues: Isoleucine--tRNA ligase (930 aa).

Positions 57-67 (PYANGNIHVGH) match the 'HIGH' region motif. Glu554 provides a ligand contact to L-isoleucyl-5'-AMP. Residues 595 to 599 (KMSKS) carry the 'KMSKS' region motif. Lys598 lines the ATP pocket. 4 residues coordinate Zn(2+): Cys888, Cys891, Cys908, and Cys911.

This sequence belongs to the class-I aminoacyl-tRNA synthetase family. IleS type 1 subfamily. Monomer. Zn(2+) is required as a cofactor.

Its subcellular location is the cytoplasm. It catalyses the reaction tRNA(Ile) + L-isoleucine + ATP = L-isoleucyl-tRNA(Ile) + AMP + diphosphate. Functionally, catalyzes the attachment of isoleucine to tRNA(Ile). As IleRS can inadvertently accommodate and process structurally similar amino acids such as valine, to avoid such errors it has two additional distinct tRNA(Ile)-dependent editing activities. One activity is designated as 'pretransfer' editing and involves the hydrolysis of activated Val-AMP. The other activity is designated 'posttransfer' editing and involves deacylation of mischarged Val-tRNA(Ile). The chain is Isoleucine--tRNA ligase from Streptococcus pneumoniae (strain Taiwan19F-14).